The chain runs to 540 residues: Chaperonin GroEL 2 (540 aa).

ATP is bound by residues 29–32 (TLGP), 86–90 (DGTTT), glycine 413, 476–478 (NAA), and aspartate 492.

The protein belongs to the chaperonin (HSP60) family. As to quaternary structure, forms a cylinder of 14 subunits composed of two heptameric rings stacked back-to-back. Interacts with the co-chaperonin GroES.

The protein resides in the cytoplasm. The catalysed reaction is ATP + H2O + a folded polypeptide = ADP + phosphate + an unfolded polypeptide.. Its function is as follows. Together with its co-chaperonin GroES, plays an essential role in assisting protein folding. The GroEL-GroES system forms a nano-cage that allows encapsulation of the non-native substrate proteins and provides a physical environment optimized to promote and accelerate protein folding. The polypeptide is Chaperonin GroEL 2 (Streptomyces albus G).